The primary structure comprises 507 residues: uncharacterized protein (507 aa).

Disordered regions lie at residues Asn-91–Leu-162, Glu-174–Gln-255, and Lys-309–Thr-422. A compositionally biased stretch (acidic residues) spans Asp-116 to Glu-143. A compositionally biased stretch (low complexity) spans Asn-144 to Ser-155. The segment covering Glu-174–Pro-193 has biased composition (basic and acidic residues). 3 stretches are compositionally biased toward low complexity: residues Gln-194 to Glu-236, Pro-243 to Gln-255, and Gln-313 to Pro-350. Residues Leu-351 to Lys-360 are compositionally biased toward basic residues. Residues Asn-378–Asp-409 show a composition bias toward low complexity.

This is an uncharacterized protein from Dictyostelium discoideum (Social amoeba).